Reading from the N-terminus, the 710-residue chain is Early transcription factor 82 kDa subunit (710 aa).

Belongs to the poxviridae VETF large subunit family. In terms of assembly, heterodimer of a 70 kDa and a 82 kDa subunit. Part of the early transcription complex composed of ETF, RAP94/OPG109, and the DNA-directed RNA polymerase.

The protein resides in the virion. Acts with RNA polymerase to initiate transcription from early gene promoters. Is recruited by the RPO-associated protein of 94 kDa RAP94/OPG109 to form the early transcription complex, which also contains the core RNA polymerase. ETF heterodimer binds to early gene promoters. This Variola virus (isolate Human/India/Ind3/1967) (VARV) protein is Early transcription factor 82 kDa subunit (OPG133).